Consider the following 1641-residue polypeptide: Vitellogenin-1 (1641 aa).

An N-terminal signal peptide occupies residues 1-18 (MWYLAFLLIIGAYAADHA). A Vitellogenin domain is found at 19–790 (WETGNEYHYL…SQDTTVPKSS (772 aa)). An intrachain disulfide couples Cys172 to Cys211. Polar residues predominate over residues 322–334 (LRQPSVSLNSMEA). The disordered stretch occupies residues 322-372 (LRQPSVSLNSMEARSSENSNEENRSDDDRSNFLSNSGEEREYLQSKPTLNE). The span at 342–351 (EENRSDDDRS) shows a compositional bias: basic and acidic residues. N-linked (GlcNAc...) asparagine glycans are attached at residues Asn344, Asn549, Asn566, Asn831, Asn875, Asn898, Asn1001, Asn1053, Asn1268, Asn1393, Asn1396, Asn1505, and Asn1523. A VWFD domain is found at 1410–1597 (ESVCVLDKTH…TYAMTQESCQ (188 aa)). Cys1435 and Cys1596 are oxidised to a cystine. A disordered region spans residues 1594 to 1641 (ESCQGPAPENKRKAEQSTCMSRSYRPSDVISDREAGRSSTKNRGWGYH).

In terms of tissue distribution, hemolymph.

It localises to the secreted. Functionally, precursor of the egg-yolk proteins that are sources of nutrients during embryonic development. The protein is Vitellogenin-1 of Solenopsis invicta (Red imported fire ant).